The following is a 714-amino-acid chain: Polyribonucleotide nucleotidyltransferase (714 aa).

Mg(2+)-binding residues include Asp489 and Asp495. The 60-residue stretch at Pro556–Ile615 folds into the KH domain. An S1 motif domain is found at Gly625–Lys693. Positions Ser691–Asp714 are disordered. A compositionally biased stretch (basic and acidic residues) spans Pro700–Asp714.

It belongs to the polyribonucleotide nucleotidyltransferase family. The cofactor is Mg(2+).

It is found in the cytoplasm. The catalysed reaction is RNA(n+1) + phosphate = RNA(n) + a ribonucleoside 5'-diphosphate. Its function is as follows. Involved in mRNA degradation. Catalyzes the phosphorolysis of single-stranded polyribonucleotides processively in the 3'- to 5'-direction. The chain is Polyribonucleotide nucleotidyltransferase from Streptococcus equi subsp. zooepidemicus (strain H70).